Reading from the N-terminus, the 266-residue chain is tRNA pseudouridine synthase A (266 aa).

The active-site Nucleophile is the Asp55. Residue Tyr110 participates in substrate binding.

The protein belongs to the tRNA pseudouridine synthase TruA family.

It catalyses the reaction uridine(38/39/40) in tRNA = pseudouridine(38/39/40) in tRNA. Its function is as follows. Formation of pseudouridine at positions 38, 39 and 40 in the anticodon stem and loop of transfer RNAs. This Thermococcus sibiricus (strain DSM 12597 / MM 739) protein is tRNA pseudouridine synthase A.